The sequence spans 547 residues: Mitogen-activated protein kinase 15 (547 aa).

The interval 1 to 20 is ubiquitin-conjugating; sequence MCAAEVDRHVSQRYLIKRRL. The 292-residue stretch at 14–305 folds into the Protein kinase domain; that stretch reads YLIKRRLGKG…AEQALQHPYV (292 aa). Residues 20-28 and lysine 43 each bind ATP; that span reads LGKGAYGIV. Aspartate 138 acts as the Proton acceptor in catalysis. Threonine 176 is modified (phosphothreonine). Residues 176 to 178 carry the TXY motif; that stretch reads TEY. Tyrosine 178 is modified (phosphotyrosine). Residues 266–286 are necessary to interact with ESRRA, to regulate its subcellular localization and to inhibit its transcriptional activity; the sequence is LDALLPPDTPPEALDLLKRLL. Positions 301 to 380 are requires for interaction with GABARAP, MAP1LC3B AND GABARAPL1; sequence QHPYVQRFHC…SQRQSLKPGV (80 aa). Residues 370-503 form a disordered region; that stretch reads ASQRQSLKPG…EAPEPRPGRR (134 aa). 2 PXXXP motif repeats span residues 378 to 382 and 385 to 389; these read PGVLP and LAETP. PXXXP motif; regulates binding with chromatin and interaction with PCNA repeat units lie at residues 393-397 and 401-405; these read RGPKP and HGHDP. Residues 401-414 show a composition bias toward basic and acidic residues; it reads HGHDPEHVEVRRQS. Omega-N-methylarginine is present on arginine 449. Residues 454-465 are compositionally biased toward polar residues; it reads SLTSQAAAQAAN. The segment covering 481 to 490 has biased composition (low complexity); sequence AVGARRVPSR. Basic and acidic residues predominate over residues 491-500; the sequence is LPREAPEPRP.

Belongs to the protein kinase superfamily. CMGC Ser/Thr protein kinase family. MAP kinase subfamily. Interacts with CSK/c-Src, ABL1, RET and TGFB1I1. Interacts with GABARAP, MAP1LC3B and GABARAPL1; controls, in a kinase-dependent fashion, both basal and starvation-induced autophagy. Interacts with ESRRA; promotes re-localization of ESRRA to the cytoplasm through a XPO1-dependent mechanism then inhibits ESRRA transcriptional activity. Interacts with PCNA; the interaction is chromatin binding- and kinase activity-dependent and prevents MDM2-mediated PCNA destruction by inhibiting the association of PCNA with MDM2. Interacts with DVL2. Interacts with CLIC3; MAPK15 does not phosphorylates CLIC3. In terms of processing, autophosphorylated on Thr-176 and Tyr-178; activates the enzyme. Post-translationally, dephosphorylated by PTPN1. Ubiquitinated. Ubiquitination may allow its tight kinase activity regulation and rapid turnover. May be ubiquitinated by a SCF E3 ligase. Ubiquitously expressed at a weak level. Highest expression is found in testis and to a lower extent in lung.

It is found in the cytoplasm. The protein resides in the cytoskeleton. Its subcellular location is the cilium basal body. It localises to the cell junction. The protein localises to the tight junction. It is found in the microtubule organizing center. The protein resides in the centrosome. Its subcellular location is the centriole. It localises to the cytoplasmic vesicle. The protein localises to the autophagosome. It is found in the golgi apparatus. The protein resides in the nucleus. Its subcellular location is the spindle. The catalysed reaction is L-seryl-[protein] + ATP = O-phospho-L-seryl-[protein] + ADP + H(+). It catalyses the reaction L-threonyl-[protein] + ATP = O-phospho-L-threonyl-[protein] + ADP + H(+). Activated by threonine and tyrosine phosphorylation. Inhibited by dual specificity phosphatases, such as DUSP1. Phosphorylation and activation in response to DNA damaging agents, serum stimulation. Constitutively activated when phosphorylated on Tyr-178. Activity depends on the relative rates of MAPK15 autophosphorylation and dephosphorylation by PTPN1. In terms of biological role, atypical MAPK protein that regulates several process such as autophagy, ciliogenesis, protein trafficking/secretion and genome integrity, in a kinase activity-dependent manner. Controls both, basal and starvation-induced autophagy throught its interaction with GABARAP, MAP1LC3B and GABARAPL1 leading to autophagosome formation, SQSTM1 degradation and reduced MAP1LC3B inhibitory phosphorylation. Regulates primary cilium formation and the localization of ciliary proteins involved in cilium structure, transport, and signaling. Prevents the relocation of the sugar-adding enzymes from the Golgi to the endoplasmic reticulum, thereby restricting the production of sugar-coated proteins. Upon amino-acid starvation, mediates transitional endoplasmic reticulum site disassembly and inhibition of secretion. Binds to chromatin leading to MAPK15 activation and interaction with PCNA, that which protects genomic integrity by inhibiting MDM2-mediated degradation of PCNA. Regulates DA transporter (DAT) activity and protein expression via activation of RhoA. In response to H(2)O(2) treatment phosphorylates ELAVL1, thus preventing it from binding to the PDCD4 3'UTR and rendering the PDCD4 mRNA accessible to miR-21 and leading to its degradation and loss of protein expression. Also functions in a kinase activity-independent manner as a negative regulator of growth. Phosphorylates in vitro FOS and MBP. During oocyte maturation, plays a key role in the microtubule organization and mei- otic cell cycle progression in oocytes, fertilized eggs, and early embryos. Interacts with ESRRA promoting its re-localization from the nucleus to the cytoplasm and then prevents its transcriptional activity. This is Mitogen-activated protein kinase 15 (Mapk15) from Rattus norvegicus (Rat).